The chain runs to 226 residues: Thiocyanate methyltransferase 1 (226 aa).

Positions 35, 39, 46, and 73 each coordinate S-adenosyl-L-methionine. Ser-85 bears the Phosphoserine mark. S-adenosyl-L-methionine is bound by residues Asp-94, Asp-122–Phe-123, and Tyr-138.

The protein belongs to the class I-like SAM-binding methyltransferase superfamily. TPMT family. In terms of tissue distribution, ubiquitous.

The enzyme catalyses thiocyanate + S-adenosyl-L-methionine = methyl thiocyanate + S-adenosyl-L-homocysteine. In terms of biological role, S-adenosyl-L-methionine-dependent methyltransferase. Probably involved in glucosinolate metabolism and defense against phytopathogens. Highly reactive to thiocyanate (NCS(-)) derived from myrosinase-mediated hydrolysis of glucosinolates upon tissue damage. Also accepts halid ions as substrates with a lower affinity. This Brassica oleracea (Wild cabbage) protein is Thiocyanate methyltransferase 1 (TMT1).